The following is a 191-amino-acid chain: Protein Ves (191 aa).

The protein belongs to the Ves family.

This chain is Protein Ves, found in Escherichia coli (strain 55989 / EAEC).